Reading from the N-terminus, the 429-residue chain is Glucose-1-phosphate adenylyltransferase (429 aa).

Residues Gly162, 177–178 (EK), and Ser209 contribute to the alpha-D-glucose 1-phosphate site.

The protein belongs to the bacterial/plant glucose-1-phosphate adenylyltransferase family. In terms of assembly, homotetramer.

It catalyses the reaction alpha-D-glucose 1-phosphate + ATP + H(+) = ADP-alpha-D-glucose + diphosphate. It functions in the pathway glycan biosynthesis; glycogen biosynthesis. Functionally, involved in the biosynthesis of ADP-glucose, a building block required for the elongation reactions to produce glycogen. Catalyzes the reaction between ATP and alpha-D-glucose 1-phosphate (G1P) to produce pyrophosphate and ADP-Glc. The protein is Glucose-1-phosphate adenylyltransferase of Picosynechococcus sp. (strain ATCC 27264 / PCC 7002 / PR-6) (Agmenellum quadruplicatum).